Reading from the N-terminus, the 234-residue chain is UPF0758 protein Smal_0281 (234 aa).

One can recognise an MPN domain in the interval 103–225; the sequence is VGNNPAAVGR…PVSFAERGLL (123 aa). Zn(2+)-binding residues include His-174, His-176, and Asp-187. The JAMM motif motif lies at 174-187; it reads HNHPSGDPEPSSAD.

The protein belongs to the UPF0758 family.

This chain is UPF0758 protein Smal_0281, found in Stenotrophomonas maltophilia (strain R551-3).